The following is an 86-amino-acid chain: Protein U17 (86 aa).

This is Protein U17 (U17/U16) from Homo sapiens (Human).